Here is a 545-residue protein sequence, read N- to C-terminus: Glucose starvation modulator protein 1 (545 aa).

Positions 20–48 (CGFCHEKHLQCDVGRPCQNCRKRNIASFC) form a DNA-binding region, zn(2)-C6 fungal-type. A compositionally biased stretch (basic residues) spans 51-60 (KVKRRRKRKR). 2 disordered regions span residues 51–131 (KVKR…AMKD) and 228–270 (YISL…WQQQ). Residues 61–71 (SDASNFDKDEA) are compositionally biased toward basic and acidic residues. A compositionally biased stretch (polar residues) spans 72-92 (ATQTLNFNTVNPGEGSSSAMT). Residues 98 to 110 (TGTTTATTTRTTT) show a composition bias toward low complexity. Positions 111–125 (NFRSESKASSSTENI) are enriched in polar residues. Residues 257 to 270 (QQKESQQMQLWQQQ) show a composition bias toward low complexity. The PAS domain maps to 416-486 (ELENMSKLVN…DLFHEHLAFG (71 aa)).

This sequence belongs to the ERT1/acuK family.

The protein localises to the nucleus. Transcription factor which regulates nonfermentable carbon utilization. This chain is Glucose starvation modulator protein 1 (GSM1), found in Zygosaccharomyces rouxii (strain ATCC 2623 / CBS 732 / NBRC 1130 / NCYC 568 / NRRL Y-229).